The following is a 186-amino-acid chain: Small ribosomal subunit protein uS19 (186 aa).

A unknown region spans residues 1-95 (MREAIKRYGS…YEELYAQYKQ (95 aa)). The segment at 96 to 186 (MTEKKAYVDP…EKTAKVVKKK (91 aa)) is small ribosomal subunit protein uS19.

This sequence belongs to the universal ribosomal protein uS19 family.

Protein S19 forms a complex with S13 that binds strongly to the 16S ribosomal RNA. The chain is Small ribosomal subunit protein uS19 from Aquifex aeolicus (strain VF5).